The sequence spans 434 residues: ATP-dependent protease ATPase subunit HslU (434 aa).

Residues Ile18, 60–65 (GVGKTE), Asp247, Glu312, and Arg384 contribute to the ATP site.

This sequence belongs to the ClpX chaperone family. HslU subfamily. In terms of assembly, a double ring-shaped homohexamer of HslV is capped on each side by a ring-shaped HslU homohexamer. The assembly of the HslU/HslV complex is dependent on binding of ATP.

The protein resides in the cytoplasm. In terms of biological role, ATPase subunit of a proteasome-like degradation complex; this subunit has chaperone activity. The binding of ATP and its subsequent hydrolysis by HslU are essential for unfolding of protein substrates subsequently hydrolyzed by HslV. HslU recognizes the N-terminal part of its protein substrates and unfolds these before they are guided to HslV for hydrolysis. In Brucella ovis (strain ATCC 25840 / 63/290 / NCTC 10512), this protein is ATP-dependent protease ATPase subunit HslU.